The sequence spans 375 residues: Metal tolerance protein B (375 aa).

At 1–57 the chain is on the cytoplasmic side; it reads MELEQICILKPDDEEEMESPSPSKTEENLGVVPLSCAFTRQEHCVSETKEREESTRR. A helical transmembrane segment spans residues 58–78; that stretch reads LSSLIFLYLIVMSVQIVGGFK. The Vacuolar segment spans residues 79-84; that stretch reads ANSLAV. Residues 85-105 traverse the membrane as a helical segment; it reads MTDAAHLLSDVAGLCVSLLAI. Topologically, residues 106–122 are cytoplasmic; the sequence is KVSSWEANPRNSFGFKR. A helical membrane pass occupies residues 123 to 143; it reads LEVLAAFLSVQLIWLVSGVII. Residues 144 to 160 lie on the Vacuolar side of the membrane; it reads HEAIQRLLSRSREVNGE. Residues 161–181 form a helical membrane-spanning segment; that stretch reads IMFGISAFGFFMNLVMVLWLG. The required for zinc-binding stretch occupies residues 182 to 206; sequence HNHSHHHHDHHHHHHNHKHQHQHHH. At 182 to 240 the chain is on the cytoplasmic side; it reads HNHSHHHHDHHHHHHNHKHQHQHHHKEVVAEEEEEEMNPLKGEKSSSKEMNINIQGAYL. The helical transmembrane segment at 241 to 261 threads the bilayer; sequence HAMADMIQSLGVMIGGGIIWV. Over 262 to 264 the chain is Vacuolar; the sequence is KPK. The helical transmembrane segment at 265-285 threads the bilayer; sequence WVLVDLICTLVFSAFALAATL. Topologically, residues 286-375 are cytoplasmic; sequence PILKNIFGIL…YHATVQVESE (90 aa).

The protein belongs to the cation diffusion facilitator (CDF) transporter (TC 2.A.4) family. SLC30A subfamily.

It is found in the vacuole membrane. Functionally, involved in sequestration of excess zinc in the cytoplasm into vacuoles to maintain zinc homeostasis. The sequence is that of Metal tolerance protein B (MTPB) from Arabidopsis thaliana (Mouse-ear cress).